Consider the following 210-residue polypeptide: Scoloptoxin SSD558 (210 aa).

The first 23 residues, 1-23 (MNILLPSTLFVLLMFQIIGSGMG), serve as a signal peptide directing secretion.

Post-translationally, contains 3 disulfide bonds. As to expression, expressed by the venom gland.

Its subcellular location is the secreted. The chain is Scoloptoxin SSD558 from Scolopendra dehaani (Thai centipede).